Reading from the N-terminus, the 437-residue chain is Nicotinate phosphoribosyltransferase (437 aa).

At H231 the chain carries Phosphohistidine; by autocatalysis.

This sequence belongs to the NAPRTase family. In terms of processing, transiently phosphorylated on a His residue during the reaction cycle. Phosphorylation strongly increases the affinity for substrates and increases the rate of nicotinate D-ribonucleotide production. Dephosphorylation regenerates the low-affinity form of the enzyme, leading to product release.

It catalyses the reaction nicotinate + 5-phospho-alpha-D-ribose 1-diphosphate + ATP + H2O = nicotinate beta-D-ribonucleotide + ADP + phosphate + diphosphate. It participates in cofactor biosynthesis; NAD(+) biosynthesis; nicotinate D-ribonucleotide from nicotinate: step 1/1. In terms of biological role, catalyzes the synthesis of beta-nicotinate D-ribonucleotide from nicotinate and 5-phospho-D-ribose 1-phosphate at the expense of ATP. The polypeptide is Nicotinate phosphoribosyltransferase (Vibrio vulnificus (strain CMCP6)).